Here is a 1256-residue protein sequence, read N- to C-terminus: Bifunctional autolysin (1256 aa).

Positions 1–29 (MAKKFNYKLPSMVALTLVGSAVTAHQVQA) are cleaved as a signal peptide. A compositionally biased stretch (polar residues) spans 103 to 138 (GDTRANQSATTNNTQPVAKSTSTTAPKTNTNVTNAG). Disordered regions lie at residues 103–151 (GDTR…NSEN), 172–219 (KTAA…KYKP), and 419–440 (TQSTTTPTTPSKPTTPSKPSTG). Composition is skewed to low complexity over residues 172–196 (KTAAPKAATTSAPKAKTEATPKVTT) and 421–439 (STTTPTTPSKPTTPSKPST). Positions 199–775 (ASAQPRSVAA…AVAQPKTAVK (577 aa)) are N-acetylmuramoyl-L-alanine amidase. 7 GW domains span residues 443 to 517 (TVAA…YNTA), 519 to 593 (SPVN…DTAK), 612 to 686 (TVSS…YNNA), 688 to 762 (SPVN…VPAA), 784 to 859 (TTQT…VQNL), 861 to 936 (KEVK…APTA), and 943 to 1017 (AAKD…KELI). The segment at 776 to 1256 (AYTVTKPQTT…GKYFDIPQYK (481 aa)) is endo-beta-N-acetylglucosaminidase.

The protein in the N-terminal section; belongs to the N-acetylmuramoyl-L-alanine amidase 2 family. In the C-terminal section; belongs to the glycosyl hydrolase 73 family. Oligomer; forms a ring structure at the cell surface which is important for efficient partitioning of daughter cells after cell division. In terms of processing, undergoes proteolytic processing to generate the two extracellular lytic enzymes, probably at the septal region on the cell surface.

The protein resides in the secreted. The catalysed reaction is Hydrolyzes the link between N-acetylmuramoyl residues and L-amino acid residues in certain cell-wall glycopeptides.. It catalyses the reaction an N(4)-(oligosaccharide-(1-&gt;3)-[oligosaccharide-(1-&gt;6)]-beta-D-Man-(1-&gt;4)-beta-D-GlcNAc-(1-&gt;4)-alpha-D-GlcNAc)-L-asparaginyl-[protein] + H2O = an oligosaccharide-(1-&gt;3)-[oligosaccharide-(1-&gt;6)]-beta-D-Man-(1-&gt;4)-D-GlcNAc + N(4)-(N-acetyl-beta-D-glucosaminyl)-L-asparaginyl-[protein]. Endohydrolysis of the di-N-acetylchitobiosyl unit in high-mannose glycopeptides and glycoproteins containing the -[(Man)5(GlcNAc)2]-Asn structure. One N-acetyl-D-glucosamine residue remains attached to the protein; the rest of the oligosaccharide is released intact. Cleaves the peptidoglycan connecting the daughter cells at the end of the cell division cycle, resulting in the separation of the two newly divided cells. Acts as an autolysin in penicillin-induced lysis. This chain is Bifunctional autolysin (atl), found in Staphylococcus aureus (strain COL).